A 458-amino-acid chain; its full sequence is Transmembrane protein 135 (458 aa).

A run of 6 helical transmembrane segments spans residues 68-88 (ILQS…FFCI), 96-116 (FYLW…AILV), 149-169 (TLRN…MFFF), 298-318 (FQLG…SCFL), 331-351 (IIAG…TISM), and 380-400 (IIYS…VQTL).

It belongs to the TMEM135 family.

It is found in the mitochondrion membrane. The protein resides in the peroxisome membrane. Involved in mitochondrial metabolism by regulating the balance between mitochondrial fusion and fission. May act as a regulator of mitochondrial fission that promotes DNM1L-dependent fission through activation of DNM1L. May be involved in peroxisome organization. The chain is Transmembrane protein 135 from Bos taurus (Bovine).